Consider the following 847-residue polypeptide: Guanine nucleotide exchange factor VAV3 (847 aa).

One can recognise a Calponin-homology (CH) domain in the interval 1–119 (MEPWKQCAQW…ETLSRLSRTP (119 aa)). Tyrosine 141 bears the Phosphotyrosine mark. Residues 192–371 (IRSCCLAEIK…KDLAQYVNEV (180 aa)) enclose the DH domain. A PH domain is found at 400 to 502 (RPQGDGEIRI…WLEQFEMALS (103 aa)). The Phorbol-ester/DAG-type zinc-finger motif lies at 513 to 562 (FHDFKMHTFTRVTSCKVCQMLLRGTFYQGYLCFKCGARAHKECLGRVDNC). The interval 560-847 (DNCGRVNSGE…FPSTYVEEDE (288 aa)) is sufficient for interaction with ROS1. The SH3 1 domain occupies 592–660 (PGLPKMQVIR…PSDAVKPCPC (69 aa)). The SH2 domain maps to 672-766 (WYAGAMERLQ…TLDTTLQFPY (95 aa)). In terms of domain architecture, SH3 2 spans 788-847 (KVLGIAIARYDFCARDMRELSLLKGDVVKIYTKMSANGWWRGEVNGRVGWFPSTYVEEDE).

Interacts with the PH domain of SH2B2. Interacts (via SH2 domains) with the phosphorylated form of EPHA2. Interacts with ROS1; constitutive interaction that mediates VAV3 phosphorylation. In terms of processing, phosphorylated. Phosphorylation can be mediated by ROS1. In osteoclasts, undergoes tyrosine phosphorylation in response to CSF1. Isoform 1 and isoform 3 are widely expressed; both are expressed at very low levels in skeletal muscle. In keratinocytes, isoform 1 is less abundant than isoform 3. Isoform 3 is detected at very low levels, if any, in adrenal gland, bone marrow, spleen, fetal brain and spinal cord; in these tissues, isoform 1 is readily detectable.

Functionally, exchange factor for GTP-binding proteins RhoA, RhoG and, to a lesser extent, Rac1. Binds physically to the nucleotide-free states of those GTPases. Plays an important role in angiogenesis. Its recruitment by phosphorylated EPHA2 is critical for EFNA1-induced RAC1 GTPase activation and vascular endothelial cell migration and assembly. May be important for integrin-mediated signaling, at least in some cell types. In osteoclasts, along with SYK tyrosine kinase, required for signaling through integrin alpha-v/beta-1 (ITAGV-ITGB1), a crucial event for osteoclast proper cytoskeleton organization and function. This signaling pathway involves RAC1, but not RHO, activation. Necessary for proper wound healing. In the course of wound healing, required for the phagocytotic cup formation preceding macrophage phagocytosis of apoptotic neutrophils. Responsible for integrin beta-2 (ITGB2)-mediated macrophage adhesion and, to a lesser extent, contributes to beta-3 (ITGB3)-mediated adhesion. Does not affect integrin beta-1 (ITGB1)-mediated adhesion. The chain is Guanine nucleotide exchange factor VAV3 (VAV3) from Homo sapiens (Human).